Consider the following 342-residue polypeptide: Lumican (342 aa).

Positions Met1–Ser18 are cleaved as a signal peptide. 3 positions are modified to sulfotyrosine: Tyr20, Tyr23, and Tyr34. Positions Ala32–Pro70 constitute an LRRNT domain. LRR repeat units follow at residues Gly71–Asn92, Asp95–Lys118, Gln121–Lys141, Ser142–Val163, Asn164–Lys185, Ser189–Val209, Ser210–Arg231, and Ala234–Ser254. A glycan (N-linked (GlcNAc...) (keratan sulfate) asparagine) is linked at Asn92. A glycan (N-linked (GlcNAc...) (keratan sulfate) asparagine) is linked at Asn131. Residue Asn164 is glycosylated (N-linked (GlcNAc...) (keratan sulfate) asparagine). A glycan (N-linked (GlcNAc...) (keratan sulfate) asparagine) is linked at Asn256. 2 LRR repeats span residues Ser259–Leu280 and Glu281–Lys300. Cys299 and Cys332 are joined by a disulfide. Ser308 carries the post-translational modification Phosphoserine. One copy of the LRR 11 repeat lies at Lys309–Tyr330.

This sequence belongs to the small leucine-rich proteoglycan (SLRP) family. SLRP class II subfamily. Binds to laminin. In terms of processing, sulfated on tyrosine residue(s). Post-translationally, contains keratan sulfate. In terms of tissue distribution, cornea and other tissues.

It is found in the secreted. It localises to the extracellular space. Its subcellular location is the extracellular matrix. The chain is Lumican (LUM) from Bos taurus (Bovine).